The sequence spans 124 residues: Large ribosomal subunit protein bL12 (124 aa).

The protein belongs to the bacterial ribosomal protein bL12 family. In terms of assembly, homodimer. Part of the ribosomal stalk of the 50S ribosomal subunit. Forms a multimeric L10(L12)X complex, where L10 forms an elongated spine to which 2 to 4 L12 dimers bind in a sequential fashion. Binds GTP-bound translation factors.

Functionally, forms part of the ribosomal stalk which helps the ribosome interact with GTP-bound translation factors. Is thus essential for accurate translation. The polypeptide is Large ribosomal subunit protein bL12 (Anaeromyxobacter dehalogenans (strain 2CP-C)).